The chain runs to 123 residues: MPTVNQLIRKPRQPKPVRNKVPALKGCPQRRGVCTRVYTTTPKKPNSALRKVAKVRLTTGIEAVCYIPGEGHNLQEHSVVLIRGGRVKDLPGVRYHILRGVLDTQGVKDRKQRRSLYGAKRPK.

D89 carries the 3-methylthioaspartic acid modification.

Belongs to the universal ribosomal protein uS12 family. In terms of assembly, part of the 30S ribosomal subunit. Contacts proteins S8 and S17. May interact with IF1 in the 30S initiation complex.

With S4 and S5 plays an important role in translational accuracy. Functionally, interacts with and stabilizes bases of the 16S rRNA that are involved in tRNA selection in the A site and with the mRNA backbone. Located at the interface of the 30S and 50S subunits, it traverses the body of the 30S subunit contacting proteins on the other side and probably holding the rRNA structure together. The combined cluster of proteins S8, S12 and S17 appears to hold together the shoulder and platform of the 30S subunit. This Caulobacter sp. (strain K31) protein is Small ribosomal subunit protein uS12.